The sequence spans 1270 residues: Nuclear exosome regulator NRDE2 (1270 aa).

Disordered regions lie at residues 1 to 22 (MFRAYGNNGLKNPERISGENPD) and 119 to 209 (SVKS…HTLM). Over residues 119–135 (SVKSLNGCQDPPETSQQ) the composition is skewed to polar residues. A compositionally biased stretch (basic residues) spans 164–184 (QRSRSREKKRRKKERRRKRSS). Positions 192–204 (RSRDRSSRARDTS) are enriched in basic and acidic residues.

Belongs to the NRDE2 family. Interacts with nrde-3.

The protein resides in the nucleus. Its subcellular location is the nucleus speckle. It localises to the nucleolus. Protein of the nuclear speckles that regulates RNA exosomal degradation. Involved in short interfering RNAs-mediated silencing in nuclei. Functions with nrde-3 in the nuclear RNA-mediated gene silencing (RNAi) pathway to regulate gene expression via inhibition of RNA polymerases I and II during the elongation phase of transcription. Required for exogenous RNAi-induced H3K27 methylation. In Caenorhabditis elegans, this protein is Nuclear exosome regulator NRDE2 (nrde-2).